The primary structure comprises 89 residues: Small ribosomal subunit protein uS15 (89 aa).

This sequence belongs to the universal ribosomal protein uS15 family. Part of the 30S ribosomal subunit. Forms a bridge to the 50S subunit in the 70S ribosome, contacting the 23S rRNA.

Its function is as follows. One of the primary rRNA binding proteins, it binds directly to 16S rRNA where it helps nucleate assembly of the platform of the 30S subunit by binding and bridging several RNA helices of the 16S rRNA. Functionally, forms an intersubunit bridge (bridge B4) with the 23S rRNA of the 50S subunit in the ribosome. This is Small ribosomal subunit protein uS15 from Lactobacillus helveticus (strain DPC 4571).